The primary structure comprises 1589 residues: Pentafunctional AROM polypeptide (1589 aa).

Residues 1–392 (MVKFEKVPIL…YGKSAHYVND (392 aa)) form a 3-dehydroquinate synthase region. NAD(+) is bound by residues 43-45 (DTN), 78-81 (EANK), 109-111 (GGI), and Asp114. Arg125 lines the 7-phospho-2-dehydro-3-deoxy-D-arabino-heptonate pocket. Residue 134–135 (TS) participates in NAD(+) binding. 7-phospho-2-dehydro-3-deoxy-D-arabino-heptonate contacts are provided by Asp141 and Lys147. Lys156 lines the NAD(+) pocket. Asn157 provides a ligand contact to 7-phospho-2-dehydro-3-deoxy-D-arabino-heptonate. NAD(+) contacts are provided by residues 174 to 177 (WLET) and Asn185. Glu189 contacts Zn(2+). 7-phospho-2-dehydro-3-deoxy-D-arabino-heptonate contacts are provided by residues 189–192 (EVIK) and Lys258. Residue Glu268 is the Proton acceptor; for 3-dehydroquinate synthase activity of the active site. 7-phospho-2-dehydro-3-deoxy-D-arabino-heptonate contacts are provided by residues 272 to 276 (RNLLN) and His279. A Zn(2+)-binding site is contributed by His279. His283 functions as the Proton acceptor; for 3-dehydroquinate synthase activity in the catalytic mechanism. 7-phospho-2-dehydro-3-deoxy-D-arabino-heptonate-binding residues include His295 and Lys364. Residue His295 coordinates Zn(2+). The interval 405–872 (VYPFSNIPQE…WDVLHTELGA (468 aa)) is EPSP synthase. Cys854 functions as the For EPSP synthase activity in the catalytic mechanism. Positions 891 to 1081 (SVVLIGMRAA…VPNKRSAFVC (191 aa)) are shikimate kinase. 896 to 903 (GMRAAGKS) is an ATP binding site. A 3-dehydroquinase region spans residues 1082-1294 (LTFGDLTEKA…SAPGQLTLAQ (213 aa)). The active-site Proton acceptor; for 3-dehydroquinate dehydratase activity is His1199. Lys1228 acts as the Schiff-base intermediate with substrate; for 3-dehydroquinate dehydratase activity in catalysis. The shikimate dehydrogenase stretch occupies residues 1307-1589 (SKKFFVVGNP…QEIFNAVTRD (283 aa)).

It in the N-terminal section; belongs to the sugar phosphate cyclases superfamily. Dehydroquinate synthase family. This sequence in the 2nd section; belongs to the EPSP synthase family. In the 3rd section; belongs to the shikimate kinase family. The protein in the 4th section; belongs to the type-I 3-dehydroquinase family. It in the C-terminal section; belongs to the shikimate dehydrogenase family. In terms of assembly, homodimer. Requires Zn(2+) as cofactor.

The protein resides in the cytoplasm. It carries out the reaction 7-phospho-2-dehydro-3-deoxy-D-arabino-heptonate = 3-dehydroquinate + phosphate. It catalyses the reaction 3-dehydroquinate = 3-dehydroshikimate + H2O. The enzyme catalyses shikimate + NADP(+) = 3-dehydroshikimate + NADPH + H(+). The catalysed reaction is shikimate + ATP = 3-phosphoshikimate + ADP + H(+). It carries out the reaction 3-phosphoshikimate + phosphoenolpyruvate = 5-O-(1-carboxyvinyl)-3-phosphoshikimate + phosphate. It functions in the pathway metabolic intermediate biosynthesis; chorismate biosynthesis; chorismate from D-erythrose 4-phosphate and phosphoenolpyruvate: step 2/7. The protein operates within metabolic intermediate biosynthesis; chorismate biosynthesis; chorismate from D-erythrose 4-phosphate and phosphoenolpyruvate: step 3/7. It participates in metabolic intermediate biosynthesis; chorismate biosynthesis; chorismate from D-erythrose 4-phosphate and phosphoenolpyruvate: step 4/7. Its pathway is metabolic intermediate biosynthesis; chorismate biosynthesis; chorismate from D-erythrose 4-phosphate and phosphoenolpyruvate: step 5/7. It functions in the pathway metabolic intermediate biosynthesis; chorismate biosynthesis; chorismate from D-erythrose 4-phosphate and phosphoenolpyruvate: step 6/7. The AROM polypeptide catalyzes 5 consecutive enzymatic reactions in prechorismate polyaromatic amino acid biosynthesis. The protein is Pentafunctional AROM polypeptide of Zygosaccharomyces rouxii (strain ATCC 2623 / CBS 732 / NBRC 1130 / NCYC 568 / NRRL Y-229).